Reading from the N-terminus, the 333-residue chain is Probable ABC transporter permease protein y4mJ (333 aa).

10 helical membrane passes run 30-50, 62-82, 84-104, 110-130, 133-153, 175-195, 228-248, 253-273, 274-294, and 300-320; these read LAIAGAIVLLVLAVGTQVPQA, AGAPLIIMSLGVLLVVITGGI, LSVGSVFSLTGMVTAQAMASG, ALIGLGVGLVFGSINGFLVTV, LAPFVVTLITFAVAGSLAFIV, IPGVPNYILFCIVLLVVIEIF, FAYVASSLLASFSGLLTISYI, STAGSSLMLQAIAAVVIGGAS, LLGGTGTAVGAVLGALMITVI, and LIGINSFWQGSVTGLAILIAV.

This sequence belongs to the binding-protein-dependent transport system permease family. AraH/RbsC subfamily.

It is found in the cell inner membrane. Functionally, probably part of the binding-protein-dependent transport system y4mIJK. This system probably transports a sugar. Probably responsible for the translocation of the substrate across the membrane. The protein is Probable ABC transporter permease protein y4mJ of Sinorhizobium fredii (strain NBRC 101917 / NGR234).